The primary structure comprises 189 residues: MEIDKELAPQDRTVTVATVLPAVPGPSPLTIKQPFQSEVLFAGTKDAEASLTIANIDSVSTLTTFYRHASLESLWVTIHPTLQAPTFPTTVGVCWVPANSPVTPAQITKTYGGQIFCIGGAINTLSPLIVKCPLEMMNPRVKDSIQYLDSPKLLISITAQPTAPPASTCIITVSGTLSMHSPLITDTST.

M1 bears the N-acetylmethionine; by host mark.

This sequence belongs to the tymoviruses capsid protein family.

It is found in the virion. Self-assembles to form a T=3 icosahedral capsid composed of 180 copies of the capsid protein. The capsid encapsulates the single-stranded RNA genome. A pentameric unit may be lost during decapsidation. The protein is Capsid protein of Brassica (Chinese cabbage).